Consider the following 211-residue polypeptide: Thymidylate kinase (211 aa).

Residue 7–14 (GMDGSGKT) participates in ATP binding.

It belongs to the thymidylate kinase family.

The catalysed reaction is dTMP + ATP = dTDP + ADP. Phosphorylation of dTMP to form dTDP in both de novo and salvage pathways of dTTP synthesis. In Mesoplasma florum (strain ATCC 33453 / NBRC 100688 / NCTC 11704 / L1) (Acholeplasma florum), this protein is Thymidylate kinase.